Reading from the N-terminus, the 275-residue chain is Formamidopyrimidine-DNA glycosylase (275 aa).

The Schiff-base intermediate with DNA role is filled by Pro-2. Glu-3 (proton donor) is an active-site residue. Lys-58 functions as the Proton donor; for beta-elimination activity in the catalytic mechanism. The DNA site is built by His-89, Arg-108, and Lys-151. An FPG-type; degenerate zinc finger spans residues 236–275; it reads KVYDRAGQPCERCPGPAACAGISRTVQSGRATYFCARTQK. The active-site Proton donor; for delta-elimination activity is Arg-265.

It belongs to the FPG family. In terms of assembly, monomer. The cofactor is Zn(2+).

The catalysed reaction is Hydrolysis of DNA containing ring-opened 7-methylguanine residues, releasing 2,6-diamino-4-hydroxy-5-(N-methyl)formamidopyrimidine.. The enzyme catalyses 2'-deoxyribonucleotide-(2'-deoxyribose 5'-phosphate)-2'-deoxyribonucleotide-DNA = a 3'-end 2'-deoxyribonucleotide-(2,3-dehydro-2,3-deoxyribose 5'-phosphate)-DNA + a 5'-end 5'-phospho-2'-deoxyribonucleoside-DNA + H(+). Functionally, involved in base excision repair of DNA damaged by oxidation or by mutagenic agents. Acts as a DNA glycosylase that recognizes and removes damaged bases. Has a preference for oxidized purines, such as 7,8-dihydro-8-oxoguanine (8-oxoG). Has AP (apurinic/apyrimidinic) lyase activity and introduces nicks in the DNA strand. Cleaves the DNA backbone by beta-delta elimination to generate a single-strand break at the site of the removed base with both 3'- and 5'-phosphates. This Acidiphilium cryptum (strain JF-5) protein is Formamidopyrimidine-DNA glycosylase.